The following is a 321-amino-acid chain: UPF0026 protein MJ1312 (321 aa).

Residues 11–236 enclose the Radical SAM core domain; the sequence is RRLGKSLGIN…AIFNEIIGKN (226 aa). [4Fe-4S] cluster is bound by residues Cys-27, Cys-31, and Cys-34.

It belongs to the UPF0026 family. [4Fe-4S] cluster is required as a cofactor.

The polypeptide is UPF0026 protein MJ1312 (Methanocaldococcus jannaschii (strain ATCC 43067 / DSM 2661 / JAL-1 / JCM 10045 / NBRC 100440) (Methanococcus jannaschii)).